The primary structure comprises 857 residues: Gelation factor (857 aa).

M1 carries the blocked amino end (Met) modification. The segment at 1 to 250 (MAAAPSGKTW…EKKRRETSDA (250 aa)) is actin-binding. 2 consecutive Calponin-homology (CH) domains span residues 12–117 (DVQK…LRYQ) and 125–227 (NSPK…DYAL). The segment at 229-246 (KEKRDADALAALEKKRRE) is regulatory site. 6 Filamin repeats span residues 245 to 346 (RETS…NVKI), 347 to 446 (DGSD…EVKI), 447 to 545 (LNSD…SIHI), 546 to 645 (KPAA…TVTV), 646 to 747 (KPAP…DVKC), and 763 to 837 (FTVA…KQVL). The segment at 832 to 857 (PFKQVLGNPGKKNPEVKSFTTTRTAN) is disordered.

Homodimer.

Functionally, F-actin cross-linking protein. The chain is Gelation factor (abpC) from Dictyostelium discoideum (Social amoeba).